The following is an 801-amino-acid chain: MSWVMVSPELVVAAAADLAGIGSAISSANAAAAVNTTGLLTAGADEVSTAIAALFGAQGQAYQAASAQAAAFYAQFVQALSAGGGAYAAAEAAAVSPLLAPINAQFVAATGRPLIGNGANGAPGTGANGGPGGWLIGNGGAGGSGAPGAGAGGNGGAGGLFGSGGAGGASTDVAGGAGGAGGAGGNAGMLFGAAGVGGVGGFSNGGATGGAGGAGGAGGLFGAGRERGSGGSGNLTGGAGGAGGNAGTLATGDGGAGGTGGASRSGGFGGAGGAGGDAGMFFGSGGSGGAGGISKSVGDSAAGGAGGAPGLIGNGGNGGNGGASTGGGDGGPGGAGGTGVLIGNGGNGGSGGTGATLGKAGIGGTGGVLLGLDGFTAPASTSPLHTLQQDVINMVNDPFQTLTGRPLIGNGANGTPGTGADGGAGGWLFGNGGNGGQGTIGGVNGGAGGAGGAGGILFGTGGTGGSGGPGATGLGGIGGAGGAALLFGSGGAGGSGGAGAVGGNGGAGGNAGALLGAAGAGGAGGAGAVGGNGGAGGNGGLFANGGAGGPGGFGSPAGAGGIGGAGGNGGLFGAGGTGGAGGGSTLAGGAGGAGGNGGLFGAGGTGGAGSHSTAAGVSGGAGGAGGDAGLLSLGASGGAGGSGGSSLTAAGVVGGIGGAGGLLFGSGGAGGSGGFSNSGNGGAGGAGGDAGLLVGSGGAGGAGASATGAATGGDGGAGGKSGAFGLGGDGGAGGATGLSGAFHIGGKGGVGGSAVLIGNGGNGGNGGNSGNAGKSGGAPGPSGAGGAGGLLLGENGLNGLM.

The region spanning 1–93 (MSWVMVSPEL…GGAYAAAEAA (93 aa)) is the PE domain.

It belongs to the mycobacterial PE family. PGRS subfamily.

This is an uncharacterized protein from Mycobacterium tuberculosis (strain ATCC 25618 / H37Rv).